A 424-amino-acid chain; its full sequence is Catabolic NAD-specific glutamate dehydrogenase RocG (424 aa).

Substrate is bound by residues lysine 80 and lysine 104. Lysine 116 serves as the catalytic Proton donor. 2 residues coordinate NAD(+): threonine 200 and asparagine 231. Serine 358 lines the substrate pocket.

The protein belongs to the Glu/Leu/Phe/Val dehydrogenases family. In terms of assembly, homohexamer. Interacts with transcriptional regulator GltC.

The catalysed reaction is L-glutamate + NAD(+) + H2O = 2-oxoglutarate + NH4(+) + NADH + H(+). Devoted to catabolic function of glutamate (and other amino acids of the glutamate family) utilization as sole nitrogen source. It is not involved in anabolic function of glutamate biosynthesis since B.subtilis possesses only one route of glutamate biosynthesis from ammonia, catalyzed by glutamate synthase. Wild-type cells are unable to utilize glutamate or glutamine as a sole carbon source; thus RocG does not function physiologically to synthesize glutamate, but it is involved in the utilization of arginine, and proline as carbon or nitrogen source. The catabolic RocG is essential for controlling gltAB expression via an inhibitory interactions with the transcriptional regulator GltC in response to the availability of sugars. This chain is Catabolic NAD-specific glutamate dehydrogenase RocG, found in Bacillus subtilis (strain 168).